The sequence spans 168 residues: Cyanate hydratase (168 aa).

Residues arginine 94, glutamate 97, and serine 120 contribute to the active site.

The protein belongs to the cyanase family.

The catalysed reaction is cyanate + hydrogencarbonate + 3 H(+) = NH4(+) + 2 CO2. Functionally, catalyzes the reaction of cyanate with bicarbonate to produce ammonia and carbon dioxide. This Oryza sativa subsp. indica (Rice) protein is Cyanate hydratase.